Reading from the N-terminus, the 144-residue chain is Catabolic 3-dehydroquinase 1 (144 aa).

Tyr-24 (proton acceptor) is an active-site residue. Residues Asn-75, His-81, and Asp-88 each coordinate substrate. The active-site Proton donor is the His-101. Residues 102-103 and Arg-112 contribute to the substrate site; that span reads IS.

It belongs to the type-II 3-dehydroquinase family. Homododecamer. Adopts a ring-like structure, composed of an arrangement of two hexameric rings stacked on top of one another.

The catalysed reaction is 3-dehydroquinate = 3-dehydroshikimate + H2O. It functions in the pathway aromatic compound metabolism; 3,4-dihydroxybenzoate biosynthesis; 3,4-dihydroxybenzoate from 3-dehydroquinate: step 1/2. Its function is as follows. Is involved in the catabolism of quinate. Allows the utilization of quinate as carbon source via the beta-ketoadipate pathway. This chain is Catabolic 3-dehydroquinase 1, found in Fusarium vanettenii (strain ATCC MYA-4622 / CBS 123669 / FGSC 9596 / NRRL 45880 / 77-13-4) (Fusarium solani subsp. pisi).